The primary structure comprises 327 residues: tRNA N6-adenosine threonylcarbamoyltransferase (327 aa).

Residues histidine 107 and histidine 111 each contribute to the Fe cation site. Substrate is bound by residues 129–133 (LVSGG), aspartate 162, glycine 175, and asparagine 263. Aspartate 291 is a binding site for Fe cation.

It belongs to the KAE1 / TsaD family. It depends on Fe(2+) as a cofactor.

The protein localises to the cytoplasm. It carries out the reaction L-threonylcarbamoyladenylate + adenosine(37) in tRNA = N(6)-L-threonylcarbamoyladenosine(37) in tRNA + AMP + H(+). Its function is as follows. Required for the formation of a threonylcarbamoyl group on adenosine at position 37 (t(6)A37) in tRNAs that read codons beginning with adenine. Is involved in the transfer of the threonylcarbamoyl moiety of threonylcarbamoyl-AMP (TC-AMP) to the N6 group of A37, together with TsaE and TsaB. TsaD likely plays a direct catalytic role in this reaction. The polypeptide is tRNA N6-adenosine threonylcarbamoyltransferase (Nautilia profundicola (strain ATCC BAA-1463 / DSM 18972 / AmH)).